The sequence spans 115 residues: MSNIIKQIEQEQMKQDVPAFRPGDSVEVKVWVVEGSKKRLQAFEGVVIAIRNRGLHSAFTVRKISNGEGVERVFQTHSPVIDSITVKRRGAVRQAKLYYLRERTGKSARIKERLG.

The protein belongs to the bacterial ribosomal protein bL19 family.

In terms of biological role, this protein is located at the 30S-50S ribosomal subunit interface and may play a role in the structure and function of the aminoacyl-tRNA binding site. The polypeptide is Large ribosomal subunit protein bL19 (Yersinia pseudotuberculosis serotype O:1b (strain IP 31758)).